Consider the following 451-residue polypeptide: Gamma-aminobutyric acid receptor subunit alpha-2 (451 aa).

The signal sequence occupies residues Met1–Ala28. Topologically, residues Asn29–Lys249 are extracellular. N-linked (GlcNAc...) asparagine glycosylation is present at Asn38. A 4-aminobutanoate-binding site is contributed by Arg94. N-linked (GlcNAc...) asparagine glycosylation is found at Asn114 and Asn138. Thr157 lines the 4-aminobutanoate pocket. An intrachain disulfide couples Cys166 to Cys180. 3 helical membrane-spanning segments follow: residues Ile250–Val270, Ala281–Ala300, and Ala312–Ala332. At Thr333–Met420 the chain is on the cytoplasmic side. Residues Lys389–Lys408 form a disordered region. The segment covering Pro396–Lys408 has biased composition (basic and acidic residues). A helical transmembrane segment spans residues Ser421–Leu441. Residues Asn442–Pro451 are Extracellular-facing.

This sequence belongs to the ligand-gated ion channel (TC 1.A.9) family. Gamma-aminobutyric acid receptor (TC 1.A.9.5) subfamily. GABRA2 sub-subfamily. Heteropentamer, formed by a combination of alpha (GABRA1-6), beta (GABRB1-3), gamma (GABRG1-3), delta (GABRD), epsilon (GABRE), rho (GABRR1-3), pi (GABRP) and theta (GABRQ) subunits, each subunit exhibiting distinct physiological and pharmacological properties. Binds UBQLN1. Interacts with KIF21B. Interacts with LHFPL4. Interacts with SHISA7; interaction leads to the regulation of GABA(A) receptor trafficking, channel deactivation kinetics and pharmacology. Glycosylated. In terms of tissue distribution, expressed in brain (at protein level).

The protein localises to the postsynaptic cell membrane. It is found in the cell membrane. It localises to the cytoplasmic vesicle membrane. Its subcellular location is the cell projection. The protein resides in the dendrite. It catalyses the reaction chloride(in) = chloride(out). Its activity is regulated as follows. Activated by pentobarbital. Inhibited by the antagonist bicuculline. In terms of biological role, alpha subunit of the heteropentameric ligand-gated chloride channel gated by gamma-aminobutyric acid (GABA), a major inhibitory neurotransmitter in the brain. GABA-gated chloride channels, also named GABA(A) receptors (GABAAR), consist of five subunits arranged around a central pore and contain GABA active binding site(s) located at the alpha and beta subunit interface(s). When activated by GABA, GABAARs selectively allow the flow of chloride anions across the cell membrane down their electrochemical gradient. Chloride influx into the postsynaptic neuron following GABAAR opening decreases the neuron ability to generate a new action potential, thereby reducing nerve transmission. The alpha-2 subunit exhibits synaptogenic activity together with beta-2 and very little to no activity together with beta-3, the gamma-2 subunit being necessary but not sufficient to induce rapid synaptic contacts formation. The chain is Gamma-aminobutyric acid receptor subunit alpha-2 from Rattus norvegicus (Rat).